Consider the following 371-residue polypeptide: S-adenosylmethionine:tRNA ribosyltransferase-isomerase (371 aa).

This sequence belongs to the QueA family. As to quaternary structure, monomer.

It is found in the cytoplasm. The catalysed reaction is 7-aminomethyl-7-carbaguanosine(34) in tRNA + S-adenosyl-L-methionine = epoxyqueuosine(34) in tRNA + adenine + L-methionine + 2 H(+). It functions in the pathway tRNA modification; tRNA-queuosine biosynthesis. Functionally, transfers and isomerizes the ribose moiety from AdoMet to the 7-aminomethyl group of 7-deazaguanine (preQ1-tRNA) to give epoxyqueuosine (oQ-tRNA). This chain is S-adenosylmethionine:tRNA ribosyltransferase-isomerase, found in Nitratidesulfovibrio vulgaris (strain ATCC 29579 / DSM 644 / CCUG 34227 / NCIMB 8303 / VKM B-1760 / Hildenborough) (Desulfovibrio vulgaris).